The chain runs to 147 residues: Hemoglobin subunit beta (147 aa).

Serine 2 is subject to N-acetylserine. The region spanning 3–147 (FLSAEEKNLV…VASALAHRYH (145 aa)) is the Globin domain. The residue at position 45 (serine 45) is a Phosphoserine. Lysine 60 carries the post-translational modification N6-acetyllysine. Histidine 64 is a binding site for heme b. Residue lysine 83 is modified to N6-acetyllysine. Histidine 93 contacts heme b. Cysteine 94 carries the post-translational modification S-nitrosocysteine.

It belongs to the globin family. As to quaternary structure, heterotetramer of two alpha chains and two beta chains. Red blood cells.

In terms of biological role, involved in oxygen transport from the lung to the various peripheral tissues. The chain is Hemoglobin subunit beta (HBB) from Panthera pardus orientalis (Amur leopard).